The following is a 291-amino-acid chain: Tyramine--L-glutamate ligase (291 aa).

Residues lysine 104 to asparagine 274 form the ATP-grasp domain. Lysine 131 to serine 176 is an ATP binding site. Residues aspartate 236, glutamate 247, and asparagine 249 each coordinate Mg(2+). Positions 236, 247, and 249 each coordinate Mn(2+).

Mg(2+) is required as a cofactor. Requires Mn(2+) as cofactor.

It carries out the reaction tyramine + L-glutamate + ATP = gamma-L-glutamyltyramine + ADP + phosphate + H(+). It participates in cofactor biosynthesis; methanofuran biosynthesis. In terms of biological role, catalyzes the formation of an amide bond between tyramine and the gamma carboxy group of L-glutamate. The enzyme also accepts phenylethylamine in vitro. The chain is Tyramine--L-glutamate ligase from Methanocaldococcus fervens (strain DSM 4213 / JCM 15782 / AG86) (Methanococcus fervens).